The primary structure comprises 360 residues: MSTSKAITLTLFIATTLLAPCNAAANATTKPLFPAILIFGDSTVDTGNNNYPLPTIFRAEHFPYGMDLPDGKANGRFSNGKLISDIIATKLNIKEFIPPFLQPNLSDQDILTGVCFASAGAGYDDLTSLSTQAIRVSEQPNMFKSYIARLKGIVGDKKAMEIINNAFVVVSAGPNDFILNYYEIPSRRLEYPFISGYQDFILKRLENFVRELYSLGVRNVLVGGLPPMGCLPIHMTAKFRNIFRFCLEHHNKDSVLYNEKLQNLLPQIEASLPGSKFLYADVYNPMMEMIQNPSKYGFKETKRGCCGTGFLETSFMCNVFSPVCQNRSEFLFFDSIHPSEATYNVIGNLLDPLIRGKFQA.

A signal peptide spans 1-23; it reads MSTSKAITLTLFIATTLLAPCNA. The active-site Nucleophile is Ser-42. N-linked (GlcNAc...) asparagine glycans are attached at residues Asn-104 and Asn-326. Catalysis depends on residues Asp-334 and His-337.

The protein belongs to the 'GDSL' lipolytic enzyme family.

It is found in the secreted. The polypeptide is GDSL esterase/lipase At2g31540 (Arabidopsis thaliana (Mouse-ear cress)).